The chain runs to 490 residues: Betaine aldehyde dehydrogenase (490 aa).

K(+) is bound by residues Thr26, Ile27, and Asp93. Residue 150–152 coordinates NAD(+); that stretch reads GAW. The Charge relay system role is filled by Lys162. 176–179 serves as a coordination point for NAD(+); that stretch reads KPSE. Val180 contacts K(+). 230–233 lines the NAD(+) pocket; it reads GVAS. K(+) is bound at residue Leu246. The Proton acceptor role is filled by Glu252. NAD(+) contacts are provided by Gly254, Cys286, and Glu387. The Nucleophile role is filled by Cys286. Cysteine sulfenic acid (-SOH) is present on Cys286. K(+)-binding residues include Lys457 and Gly460. The active-site Charge relay system is Glu464.

It belongs to the aldehyde dehydrogenase family. As to quaternary structure, dimer of dimers. K(+) is required as a cofactor.

It catalyses the reaction betaine aldehyde + NAD(+) + H2O = glycine betaine + NADH + 2 H(+). It functions in the pathway amine and polyamine biosynthesis; betaine biosynthesis via choline pathway; betaine from betaine aldehyde: step 1/1. Its function is as follows. Involved in the biosynthesis of the osmoprotectant glycine betaine. Catalyzes the irreversible oxidation of betaine aldehyde to the corresponding acid. The protein is Betaine aldehyde dehydrogenase of Escherichia coli O6:K15:H31 (strain 536 / UPEC).